A 363-amino-acid polypeptide reads, in one-letter code: Anthranilate phosphoribosyltransferase (363 aa).

5-phospho-alpha-D-ribose 1-diphosphate is bound by residues Gly85, 88–89, Thr93, 95–98, 113–121, and Ala125; these read GD, NVST, and KHGNRALSS. An anthranilate-binding site is contributed by Gly85. Ser97 serves as a coordination point for Mg(2+). An anthranilate-binding site is contributed by Asn116. Arg171 is a binding site for anthranilate. Residues Asp233 and Glu234 each coordinate Mg(2+).

Belongs to the anthranilate phosphoribosyltransferase family. In terms of assembly, homodimer. The cofactor is Mg(2+).

It carries out the reaction N-(5-phospho-beta-D-ribosyl)anthranilate + diphosphate = 5-phospho-alpha-D-ribose 1-diphosphate + anthranilate. The protein operates within amino-acid biosynthesis; L-tryptophan biosynthesis; L-tryptophan from chorismate: step 2/5. Catalyzes the transfer of the phosphoribosyl group of 5-phosphorylribose-1-pyrophosphate (PRPP) to anthranilate to yield N-(5'-phosphoribosyl)-anthranilate (PRA). The sequence is that of Anthranilate phosphoribosyltransferase from Gluconobacter oxydans (strain 621H) (Gluconobacter suboxydans).